Consider the following 681-residue polypeptide: DNA-directed RNA polymerase subunit beta' (681 aa).

4 residues coordinate Zn(2+): Cys-69, Cys-71, Cys-87, and Cys-90. Positions 489, 491, and 493 each coordinate Mg(2+).

The protein belongs to the RNA polymerase beta' chain family. RpoC1 subfamily. In terms of assembly, in plastids the minimal PEP RNA polymerase catalytic core is composed of four subunits: alpha, beta, beta', and beta''. When a (nuclear-encoded) sigma factor is associated with the core the holoenzyme is formed, which can initiate transcription. Requires Mg(2+) as cofactor. The cofactor is Zn(2+).

The protein localises to the plastid. It localises to the chloroplast. It carries out the reaction RNA(n) + a ribonucleoside 5'-triphosphate = RNA(n+1) + diphosphate. Its function is as follows. DNA-dependent RNA polymerase catalyzes the transcription of DNA into RNA using the four ribonucleoside triphosphates as substrates. In Nicotiana sylvestris (Wood tobacco), this protein is DNA-directed RNA polymerase subunit beta'.